We begin with the raw amino-acid sequence, 880 residues long: Leucine--tRNA ligase (880 aa).

Positions 49–59 (PYPSGRIHMGH) match the 'HIGH' region motif. The 'KMSKS' region motif lies at 638-642 (KMSKS). Lysine 641 contributes to the ATP binding site.

Belongs to the class-I aminoacyl-tRNA synthetase family.

The protein resides in the cytoplasm. The catalysed reaction is tRNA(Leu) + L-leucine + ATP = L-leucyl-tRNA(Leu) + AMP + diphosphate. The sequence is that of Leucine--tRNA ligase from Bartonella henselae (strain ATCC 49882 / DSM 28221 / CCUG 30454 / Houston 1) (Rochalimaea henselae).